A 220-amino-acid chain; its full sequence is Germin-like protein subfamily T member 2 (220 aa).

The N-terminal stretch at 1–27 (MTTLQISSSLFRSFLLVICVFVIPSLS) is a signal peptide. Cysteine 37 and cysteine 52 are oxidised to a cystine. Positions 64 to 212 (SGLGGPLNTS…TFRTDDVTVN (149 aa)) constitute a Cupin type-1 domain. Asparagine 71 carries an N-linked (GlcNAc...) asparagine glycan. Histidine 112, histidine 114, and glutamate 119 together coordinate Mn(2+). N-linked (GlcNAc...) asparagine glycosylation is present at asparagine 136. Histidine 158 contacts Mn(2+).

Belongs to the germin family. In terms of assembly, oligomer (believed to be a pentamer but probably hexamer).

It is found in the secreted. The protein localises to the extracellular space. Its subcellular location is the apoplast. Its function is as follows. May play a role in plant defense. Probably has no oxalate oxidase activity even if the active site is conserved. This Arabidopsis thaliana (Mouse-ear cress) protein is Germin-like protein subfamily T member 2.